A 695-amino-acid chain; its full sequence is Elongation factor G 1 (695 aa).

The region spanning T6–K281 is the tr-type G domain. GTP contacts are provided by residues A15 to T22, D79 to H83, and N133 to D136.

Belongs to the TRAFAC class translation factor GTPase superfamily. Classic translation factor GTPase family. EF-G/EF-2 subfamily.

The protein localises to the cytoplasm. Functionally, catalyzes the GTP-dependent ribosomal translocation step during translation elongation. During this step, the ribosome changes from the pre-translocational (PRE) to the post-translocational (POST) state as the newly formed A-site-bound peptidyl-tRNA and P-site-bound deacylated tRNA move to the P and E sites, respectively. Catalyzes the coordinated movement of the two tRNA molecules, the mRNA and conformational changes in the ribosome. This chain is Elongation factor G 1 (fusA), found in Synechocystis sp. (strain ATCC 27184 / PCC 6803 / Kazusa).